Here is a 312-residue protein sequence, read N- to C-terminus: Olfactory receptor-like protein COR5 (312 aa).

The Extracellular portion of the chain corresponds to 1–26 (MALGNCTTPTTFILSGLTDNPRLQMP). An N-linked (GlcNAc...) asparagine glycan is attached at asparagine 5. The helical transmembrane segment at 27-49 (LFMVFLAIYTITLLANLGLIALI) threads the bilayer. The Cytoplasmic portion of the chain corresponds to 50–57 (SVDFHLQT). A helical transmembrane segment spans residues 58-79 (PMYIFLQNLSFTDAAYSTVITP). Residues 80–100 (KMLATFLEERRTISYVGCILQ) lie on the Extracellular side of the membrane. A disulfide bridge links cysteine 97 with cysteine 179. The helical transmembrane segment at 101–120 (YFSFVLLTSSECLLLAVMAY) threads the bilayer. Topologically, residues 121 to 139 (DRYVAICKPLLYPAIMTKA) are cytoplasmic. A helical membrane pass occupies residues 140–164 (VCWRLVEGLYSLAFLNSLVHTSGLL). The Extracellular segment spans residues 165-205 (KLSFCSSNVVNHFFCDNSPLFQISSSSTTLNELLVFIFGSW). A helical transmembrane segment spans residues 206-226 (FAMSSIITTPISYVFIILTVV). Residues 227-239 (RIRSKDGKYKAFS) lie on the Cytoplasmic side of the membrane. The helical transmembrane segment at 240–260 (TCTSHLMAVSLFHGTVIFMYL) threads the bilayer. Residues 261–271 (RPVKLFSLDTD) are Extracellular-facing. The helical transmembrane segment at 272-292 (KIASLFYTVVIPMLNPLIYSW) threads the bilayer. The Cytoplasmic segment spans residues 293–312 (RNKEVKDALRRVIATNVWIH).

The protein belongs to the G-protein coupled receptor 1 family.

The protein resides in the cell membrane. Its function is as follows. Odorant receptor. This Gallus gallus (Chicken) protein is Olfactory receptor-like protein COR5 (COR5).